Consider the following 284-residue polypeptide: MLTLLAPAKVNLSLEVLYRRNDGYHELRSIIQSLSLCDRLSFSPAKTVQISSDSPDWQAEHSLVSKAVALFSEKCGQGRGVNLTIAKRIPLVSGLGGDSSCAAAVLKGLNKLWGCGYPRWRLMELGAELGSDVPFFMMGGTAMMEGRGETVTPLPTLNQMWAVLLVPEIEMPPDKTAALYRNLHADSFSSGEISDKLLEDICQGKLSYSSCFNVFEKIAFTLFPDLAKYRWQFLEAGAYQIFLAGAGPTLFTLLKDKNMAEKIYHNLCQKGHQAYLVSTLGPLD.

Residue lysine 9 is part of the active site. Residue 90 to 100 (PLVSGLGGDSS) coordinates ATP. The active site involves aspartate 132.

The protein belongs to the GHMP kinase family. IspE subfamily.

The enzyme catalyses 4-CDP-2-C-methyl-D-erythritol + ATP = 4-CDP-2-C-methyl-D-erythritol 2-phosphate + ADP + H(+). It functions in the pathway isoprenoid biosynthesis; isopentenyl diphosphate biosynthesis via DXP pathway; isopentenyl diphosphate from 1-deoxy-D-xylulose 5-phosphate: step 3/6. Catalyzes the phosphorylation of the position 2 hydroxy group of 4-diphosphocytidyl-2C-methyl-D-erythritol. The protein is 4-diphosphocytidyl-2-C-methyl-D-erythritol kinase of Dehalococcoides mccartyi (strain ATCC BAA-2266 / KCTC 15142 / 195) (Dehalococcoides ethenogenes (strain 195)).